The following is a 381-amino-acid chain: Sulfofructose kinase (381 aa).

ATP contacts are provided by residues Gly10, 72–73 (RY), and 100–103 (GNGT). Residue Asn101 participates in Mg(2+) binding. The active-site Proton acceptor is Asp131.

The protein belongs to the phosphofructokinase type A (PFKA) family. It depends on Mg(2+) as a cofactor.

It carries out the reaction 6-deoxy-6-sulfo-D-fructose + ATP = 6-deoxy-6-sulfo-D-fructose 1-phosphate + ADP + H(+). Its function is as follows. Part of the sulfo-EMP2 pathway, a D-sulfoquinovose degradation pathway that produces sulfolactate (SL). Phosphorylates 6-deoxy-6-sulfo-D-fructose (SF) to 6-deoxy-6-sulfo-D-fructose 1-phosphate (SFP). The chain is Sulfofructose kinase from Alkalicoccus urumqiensis (Bacillus urumqiensis).